A 76-amino-acid chain; its full sequence is Small ribosomal subunit protein bS21A (76 aa).

The segment covering 35 to 52 has biased composition (basic and acidic residues); the sequence is HYEKPSEKRAREKAEAVR. A disordered region spans residues 35 to 76; that stretch reads HYEKPSEKRAREKAEAVRRARKLARKRAQREGLVSGRPAAAR. Positions 53-62 are enriched in basic residues; sequence RARKLARKRA.

It belongs to the bacterial ribosomal protein bS21 family.

This is Small ribosomal subunit protein bS21A from Chelativorans sp. (strain BNC1).